A 658-amino-acid polypeptide reads, in one-letter code: MGGHLSPWPTYTSGQTILQNRKPCSDDYRKRVGSCQQHPFRTAKPQYLEELENYLRKELLLLDLGTDSTQELRLQPYREIFEFFIEDFKTYKPLLSSIKNAYEGMLAHQREKIRALEPLKAKLVTVNEDCNERILAMRAEEKYEISLLKKEKMNLLKLIDKKNEEKISLQSEVTKLRKNLAEEYLHYLSERDACKILIADLNELRYQREDMSLAQSPGIWGEDPVKLTLALKMTRQDLTRTQMELNNMKANFGDVVPRRDFEMQEKTNKDLQEQLDTLRASYEEVRKEHEILMQLHMSTLKERDQFFSELQEIQRTSTPRPDWTKCKDVVAGGPERWQMLAEGKNSDQLVDVLLEEIGSGLLREKDFFPGLGYGEAIPAFLRFDGLVENKKPSKKDVVNLLKDAWKERLAEEQKETFPDFFFNFLEHRFGPSDAMAWAYTIFENIKIFHSNEVMSQFYAVLMGKRSENVYVTQKETVAQLLKEMTNADSQNEGLLTMEQFNTVLKSTFPLKTEEQIQELMEAGGWHPSSSNADLLNYRSLFMEDEEGQSEPFVQKLWEQYMDEKDEYLQQLKQELGIELHEEVTLPKLRGGLMTIDPSLDKQTVNTYMSQAFQLPESEMPEEGDEKEEAVVEILQTALERLQVIDIRRVGPREPEPAS.

2 coiled-coil regions span residues 144–184 and 230–295; these read EISL…AEEY and ALKM…LMQL.

In terms of assembly, interacts with TSNAX.

It is found in the cytoplasm. The protein resides in the perinuclear region. Functionally, possible role in spermatogenesis. In Homo sapiens (Human), this protein is Translin-associated factor X-interacting protein 1.